The following is a 301-amino-acid chain: Acetyl-coenzyme A carboxylase carboxyl transferase subunit beta (301 aa).

Residues 23–292 enclose the CoA carboxyltransferase N-terminal domain; sequence VWTKCDSCGQ…PSPDEPRESV (270 aa). Positions 27, 30, 46, and 49 each coordinate Zn(2+). The C4-type zinc finger occupies 27-49; sequence CDSCGQVLYRAELERNLEVCPKC. Positions 280–301 are disordered; that stretch reads LPAPSPDEPRESVVVPDQEPEA.

This sequence belongs to the AccD/PCCB family. In terms of assembly, acetyl-CoA carboxylase is a heterohexamer composed of biotin carboxyl carrier protein (AccB), biotin carboxylase (AccC) and two subunits each of ACCase subunit alpha (AccA) and ACCase subunit beta (AccD). Zn(2+) serves as cofactor.

It is found in the cytoplasm. The enzyme catalyses N(6)-carboxybiotinyl-L-lysyl-[protein] + acetyl-CoA = N(6)-biotinyl-L-lysyl-[protein] + malonyl-CoA. Its pathway is lipid metabolism; malonyl-CoA biosynthesis; malonyl-CoA from acetyl-CoA: step 1/1. In terms of biological role, component of the acetyl coenzyme A carboxylase (ACC) complex. Biotin carboxylase (BC) catalyzes the carboxylation of biotin on its carrier protein (BCCP) and then the CO(2) group is transferred by the transcarboxylase to acetyl-CoA to form malonyl-CoA. This chain is Acetyl-coenzyme A carboxylase carboxyl transferase subunit beta, found in Enterobacter sp. (strain 638).